A 340-amino-acid polypeptide reads, in one-letter code: 4-hydroxy-3-methylbut-2-enyl diphosphate reductase (340 aa).

Cys21 lines the [4Fe-4S] cluster pocket. Residues His50 and His83 each contribute to the (2E)-4-hydroxy-3-methylbut-2-enyl diphosphate site. His50 and His83 together coordinate dimethylallyl diphosphate. His50 and His83 together coordinate isopentenyl diphosphate. Cys105 is a [4Fe-4S] cluster binding site. His133 lines the (2E)-4-hydroxy-3-methylbut-2-enyl diphosphate pocket. His133 is a binding site for dimethylallyl diphosphate. Residue His133 coordinates isopentenyl diphosphate. Catalysis depends on Glu135, which acts as the Proton donor. A (2E)-4-hydroxy-3-methylbut-2-enyl diphosphate-binding site is contributed by Thr173. Cys203 lines the [4Fe-4S] cluster pocket. The (2E)-4-hydroxy-3-methylbut-2-enyl diphosphate site is built by Ser231, Ser232, Asn233, and Ser276. Positions 231, 232, 233, and 276 each coordinate dimethylallyl diphosphate. 4 residues coordinate isopentenyl diphosphate: Ser231, Ser232, Asn233, and Ser276. Residues 320-340 form a disordered region; it reads KARGEPLTRSATAGDRMNADR.

This sequence belongs to the IspH family. The cofactor is [4Fe-4S] cluster.

The enzyme catalyses isopentenyl diphosphate + 2 oxidized [2Fe-2S]-[ferredoxin] + H2O = (2E)-4-hydroxy-3-methylbut-2-enyl diphosphate + 2 reduced [2Fe-2S]-[ferredoxin] + 2 H(+). It carries out the reaction dimethylallyl diphosphate + 2 oxidized [2Fe-2S]-[ferredoxin] + H2O = (2E)-4-hydroxy-3-methylbut-2-enyl diphosphate + 2 reduced [2Fe-2S]-[ferredoxin] + 2 H(+). The protein operates within isoprenoid biosynthesis; dimethylallyl diphosphate biosynthesis; dimethylallyl diphosphate from (2E)-4-hydroxy-3-methylbutenyl diphosphate: step 1/1. It functions in the pathway isoprenoid biosynthesis; isopentenyl diphosphate biosynthesis via DXP pathway; isopentenyl diphosphate from 1-deoxy-D-xylulose 5-phosphate: step 6/6. Catalyzes the conversion of 1-hydroxy-2-methyl-2-(E)-butenyl 4-diphosphate (HMBPP) into a mixture of isopentenyl diphosphate (IPP) and dimethylallyl diphosphate (DMAPP). Acts in the terminal step of the DOXP/MEP pathway for isoprenoid precursor biosynthesis. The polypeptide is 4-hydroxy-3-methylbut-2-enyl diphosphate reductase (Acidothermus cellulolyticus (strain ATCC 43068 / DSM 8971 / 11B)).